The primary structure comprises 282 residues: Ribosomal RNA small subunit methyltransferase A (282 aa).

6 residues coordinate S-adenosyl-L-methionine: N28, L30, G55, E77, D103, and N122.

This sequence belongs to the class I-like SAM-binding methyltransferase superfamily. rRNA adenine N(6)-methyltransferase family. RsmA subfamily.

The protein localises to the cytoplasm. The catalysed reaction is adenosine(1518)/adenosine(1519) in 16S rRNA + 4 S-adenosyl-L-methionine = N(6)-dimethyladenosine(1518)/N(6)-dimethyladenosine(1519) in 16S rRNA + 4 S-adenosyl-L-homocysteine + 4 H(+). Functionally, specifically dimethylates two adjacent adenosines (A1518 and A1519) in the loop of a conserved hairpin near the 3'-end of 16S rRNA in the 30S particle. May play a critical role in biogenesis of 30S subunits. The polypeptide is Ribosomal RNA small subunit methyltransferase A (Paracoccus denitrificans (strain Pd 1222)).